The chain runs to 398 residues: Serine/threonine-protein phosphatase 4 regulatory subunit 2-B (398 aa).

The interval 138 to 398 is disordered; that stretch reads SSEKNTSPSL…NAPEEPMEQD (261 aa). Composition is skewed to polar residues over residues 139 to 149, 156 to 170, and 183 to 193; these read SEKNTSPSLNR, PSNS…NVNG, and TLSSPMNTNGL. The segment covering 197-211 has biased composition (basic and acidic residues); sequence MENKESDLQQKEKSL. Residues 278–294 are compositionally biased toward polar residues; the sequence is ASTSADKGKESCQTAQT. Over residues 338–366 the composition is skewed to low complexity; the sequence is SESACSLNSEEPNSAAAAASTAGTDSSEG.

The protein belongs to the PPP4R2 family. As to quaternary structure, serine/threonine-protein phosphatase 4 (PP4) occurs in different assemblies of the catalytic and one or more regulatory subunits.

Regulatory subunit of serine/threonine-protein phosphatase 4 (PP4). The protein is Serine/threonine-protein phosphatase 4 regulatory subunit 2-B (ppp4r2-b) of Xenopus laevis (African clawed frog).